We begin with the raw amino-acid sequence, 316 residues long: MSLGIMEEEDLAEYFRLQYGERLLQLLQKFPSIEDQSDSPSVRLLEKKKEAKIMHHAMEQKKETFQRRMETLNLRWEELGIKEAQLKAHIQKFEQFIQENDQKRIRALKKANKERELKRQRMRELAKAKQEMAVLRLEHQRLSAKLQEYSIFNKYLEKVVENSEFEEIHEVIARYKTLVSMHHDLMQSAQEGQEKIERAKARLARYKEEKDDEILQHNNELARLQMRFDRARSDVIIWESRWAHIQNTAAKKTLLLGTIKMATLNLFQIVSKQLKEATFVSLEDTHKQLDMIQQFIQDLSDIWAEVKKKELQQIRV.

Coiled-coil stretches lie at residues 43–151 and 182–236; these read RLLE…EYSI and HHDL…SDVI.

The protein belongs to the CFAP73 family. Interacts with ODF1 and ODF2. Interacts with CCDC38. Interacts with CCDC146. Interacts with CFAP53.

Its subcellular location is the cytoplasm. It localises to the perinuclear region. The protein localises to the cytoskeleton. It is found in the cell projection. The protein resides in the cilium. Its subcellular location is the flagellum. It localises to the microtubule organizing center. The protein localises to the centrosome. Functionally, essential for male fertility. Required for sperm development. The chain is Coiled-coil domain-containing protein 42 from Bos taurus (Bovine).